We begin with the raw amino-acid sequence, 191 residues long: Cell division protein SepF (191 aa).

The segment at 21–96 (EVEEPAVASV…NQQPAQEKTT (76 aa)) is disordered. Low complexity predominate over residues 25-56 (PAVASVKRQQDAAQPASQQQKAQSHQYHQSAS). 2 stretches are compositionally biased toward polar residues: residues 57 to 69 (RPSQ…GQNR) and 86 to 95 (HNQQPAQEKT).

Belongs to the SepF family. In terms of assembly, homodimer. Interacts with FtsZ.

It is found in the cytoplasm. Its function is as follows. Cell division protein that is part of the divisome complex and is recruited early to the Z-ring. Probably stimulates Z-ring formation, perhaps through the cross-linking of FtsZ protofilaments. Its function overlaps with FtsA. This Streptococcus mutans serotype c (strain ATCC 700610 / UA159) protein is Cell division protein SepF.